We begin with the raw amino-acid sequence, 110 residues long: Antimicrobial peptide microplusin (110 aa).

The signal sequence occupies residues 1–20; that stretch reads MKAIFVSALLVVALVASTSA. 3 cysteine pairs are disulfide-bonded: cysteine 26–cysteine 72, cysteine 39–cysteine 100, and cysteine 61–cysteine 66.

Expressed in the hemocytes, fat body and ovaries.

It is found in the secreted. Functionally, has bacteriostatic activity against the Gram-positive bacterium M.luteus, but not against Gram-negative bacterium E.coli SBS363. Has fungistatic activity against C.neoformans, but not C.albicans. Binds and sequesters copper and iron ions. Copper-chelating is crucial for antimicrobial activity against M.luteus. This chain is Antimicrobial peptide microplusin, found in Rhipicephalus microplus (Cattle tick).